Here is a 660-residue protein sequence, read N- to C-terminus: Bifunctional polymyxin resistance protein ArnA (660 aa).

A formyltransferase ArnAFT region spans residues 1–304 (MKAVIFAYHD…TLGLVAGARL (304 aa)). H104 serves as the catalytic Proton donor; for formyltransferase activity. (6R)-10-formyltetrahydrofolate is bound by residues R114 and 136–140 (VKRAD). The segment at 314 to 660 (RRIRVLILGV…RSVDVAERAS (347 aa)) is dehydrogenase ArnADH. NAD(+) contacts are provided by residues D347 and 368–369 (DI). UDP-alpha-D-glucuronate contacts are provided by residues A393, Y398, and 432 to 433 (TS). Catalysis depends on E434, which acts as the Proton acceptor; for decarboxylase activity. UDP-alpha-D-glucuronate contacts are provided by residues R460, N492, 526–535 (KLIDGGQQKR), and Y613. R619 (proton donor; for decarboxylase activity) is an active-site residue.

This sequence in the N-terminal section; belongs to the Fmt family. UDP-L-Ara4N formyltransferase subfamily. The protein in the C-terminal section; belongs to the NAD(P)-dependent epimerase/dehydratase family. UDP-glucuronic acid decarboxylase subfamily. As to quaternary structure, homohexamer, formed by a dimer of trimers.

It carries out the reaction UDP-alpha-D-glucuronate + NAD(+) = UDP-beta-L-threo-pentopyranos-4-ulose + CO2 + NADH. The catalysed reaction is UDP-4-amino-4-deoxy-beta-L-arabinose + (6R)-10-formyltetrahydrofolate = UDP-4-deoxy-4-formamido-beta-L-arabinose + (6S)-5,6,7,8-tetrahydrofolate + H(+). The protein operates within nucleotide-sugar biosynthesis; UDP-4-deoxy-4-formamido-beta-L-arabinose biosynthesis; UDP-4-deoxy-4-formamido-beta-L-arabinose from UDP-alpha-D-glucuronate: step 1/3. It functions in the pathway nucleotide-sugar biosynthesis; UDP-4-deoxy-4-formamido-beta-L-arabinose biosynthesis; UDP-4-deoxy-4-formamido-beta-L-arabinose from UDP-alpha-D-glucuronate: step 3/3. It participates in bacterial outer membrane biogenesis; lipopolysaccharide biosynthesis. Functionally, bifunctional enzyme that catalyzes the oxidative decarboxylation of UDP-glucuronic acid (UDP-GlcUA) to UDP-4-keto-arabinose (UDP-Ara4O) and the addition of a formyl group to UDP-4-amino-4-deoxy-L-arabinose (UDP-L-Ara4N) to form UDP-L-4-formamido-arabinose (UDP-L-Ara4FN). The modified arabinose is attached to lipid A and is required for resistance to polymyxin and cationic antimicrobial peptides. This is Bifunctional polymyxin resistance protein ArnA from Salmonella choleraesuis (strain SC-B67).